We begin with the raw amino-acid sequence, 521 residues long: Circadian clock oscillator protein KaiC (521 aa).

KaiC domains lie at 1–248 and 262–521; these read MNEP…INIF and ARIS…LDEE. Residues Gly50, Thr51, Gly52, Lys53, Thr54, Leu55, Ser90, Lys225, Leu226, Arg227, Thr229, His231, Thr241, Thr291, Gly292, Thr293, Gly294, Lys295, Thr296, and Leu297 each contribute to the ATP site. Thr54 provides a ligand contact to Mg(2+). Position 296 (Thr296) interacts with Mg(2+). Glu319 lines the Mg(2+) pocket. Position 332 (Trp332) interacts with ATP. Ser432 bears the Phosphoserine; by autocatalysis mark. Thr433 is subject to Phosphothreonine; by autocatalysis. Residues Arg452, Lys458, Met459, Arg460, Ser462, His464, and Lys466 each contribute to the ATP site.

Belongs to the KaiC family. Homohexamer; hexamerization is dependent on ATP-binding. The KaiABC complex composition changes during the circadian cycle to control KaiC phosphorylation. Complexes KaiC(6), KaiA(2-4):KaiC(6), KaiB(6):KaiC(6) and KaiC(6):KaiB(6):KaiA(12) are among the most important forms, many form cooperatively. KaiC interacts with SasA, activating its autokinase function and leading to RpaA activation. It depends on Mg(2+) as a cofactor. Phosphorylated on serine and threonine residues by autocatalysis. Has a 4 step phosphorylation cycle; the autokinase acts first on Thr-433, then Ser-432. When Ser-432 is modified KaiC switches to an autophosphatase mode, acting first on phospho-Thr-433 then phospho-Ser-432.

It carries out the reaction L-seryl-[protein] + ATP = O-phospho-L-seryl-[protein] + ADP + H(+). The enzyme catalyses L-threonyl-[protein] + ATP = O-phospho-L-threonyl-[protein] + ADP + H(+). It catalyses the reaction ATP + H2O = ADP + phosphate + H(+). Its activity is regulated as follows. The interaction with KaiA enhances its phosphorylation status, while the interaction with KaiB decreases it. Functionally, central component of the KaiABC oscillator complex, which constitutes the main circadian regulator in cyanobacteria. Complex composition changes during the circadian cycle to control KaiC phosphorylation. KaiA stimulates KaiC autophosphorylation, while KaiB sequesters KaiA, leading to KaiC autodephosphorylation. Clock output pathways impact the RpaA transcriptional regulator. KaiC enhances the autophosphorylation activity of SasA, which then transfers its phosphate group to RpaA to activate it. KaiB and KaiC together enhance the phospho-RpaA dephosphatase activity of CikA. Its function is as follows. Has a weak, temperature-independent ATPase activity; ATPase activity defines the circadian period. The phosphorylation state of KaiC modulates its ATPase activity and effects KaiB binding. The polypeptide is Circadian clock oscillator protein KaiC (Rippkaea orientalis (strain PCC 8801 / RF-1) (Cyanothece sp. (strain PCC 8801))).